We begin with the raw amino-acid sequence, 562 residues long: NAD-dependent malic enzyme (562 aa).

Residue Tyr101 is the Proton donor of the active site. Residue Arg154 participates in NAD(+) binding. Lys172 acts as the Proton acceptor in catalysis. Glu243, Asp244, and Asp267 together coordinate a divalent metal cation. Positions 267 and 415 each coordinate NAD(+).

Belongs to the malic enzymes family. Homotetramer. Mg(2+) is required as a cofactor. The cofactor is Mn(2+).

The enzyme catalyses (S)-malate + NAD(+) = pyruvate + CO2 + NADH. The catalysed reaction is oxaloacetate + H(+) = pyruvate + CO2. This chain is NAD-dependent malic enzyme, found in Aliivibrio fischeri (strain ATCC 700601 / ES114) (Vibrio fischeri).